Reading from the N-terminus, the 279-residue chain is 4-diphosphocytidyl-2-C-methyl-D-erythritol kinase (279 aa).

K11 is an active-site residue. P95 to S105 contributes to the ATP binding site. The active site involves D137.

Belongs to the GHMP kinase family. IspE subfamily.

It carries out the reaction 4-CDP-2-C-methyl-D-erythritol + ATP = 4-CDP-2-C-methyl-D-erythritol 2-phosphate + ADP + H(+). It functions in the pathway isoprenoid biosynthesis; isopentenyl diphosphate biosynthesis via DXP pathway; isopentenyl diphosphate from 1-deoxy-D-xylulose 5-phosphate: step 3/6. In terms of biological role, catalyzes the phosphorylation of the position 2 hydroxy group of 4-diphosphocytidyl-2C-methyl-D-erythritol. This is 4-diphosphocytidyl-2-C-methyl-D-erythritol kinase from Geotalea daltonii (strain DSM 22248 / JCM 15807 / FRC-32) (Geobacter daltonii).